A 508-amino-acid polypeptide reads, in one-letter code: Histidine--tRNA ligase, cytoplasmic (508 aa).

Positions 3 to 59 (SPALEELVLNSRHRLVRGLKQQKASADQIEEEVAKLLKLKAQLGHDESKQKFVLKTP) constitute a WHEP-TRS domain. A Phosphoserine modification is found at serine 66. Residues 130–132 (DLT), arginine 157, aspartate 177, arginine 326, and 330–331 (YY) each bind L-histidine.

This sequence belongs to the class-II aminoacyl-tRNA synthetase family. As to quaternary structure, homodimer.

Its subcellular location is the cytoplasm. The enzyme catalyses tRNA(His) + L-histidine + ATP = L-histidyl-tRNA(His) + AMP + diphosphate + H(+). Functionally, catalyzes the ATP-dependent ligation of histidine to the 3'-end of its cognate tRNA, via the formation of an aminoacyl-adenylate intermediate (His-AMP). Plays a role in axon guidance. The chain is Histidine--tRNA ligase, cytoplasmic (HARS1) from Mesocricetus auratus (Golden hamster).